The chain runs to 300 residues: Ribosomal RNA small subunit methyltransferase H (300 aa).

Residues 46–48 (GGH), D65, F92, D107, and Q114 contribute to the S-adenosyl-L-methionine site.

The protein belongs to the methyltransferase superfamily. RsmH family.

Its subcellular location is the cytoplasm. It catalyses the reaction cytidine(1402) in 16S rRNA + S-adenosyl-L-methionine = N(4)-methylcytidine(1402) in 16S rRNA + S-adenosyl-L-homocysteine + H(+). Functionally, specifically methylates the N4 position of cytidine in position 1402 (C1402) of 16S rRNA. In Prochlorococcus marinus subsp. pastoris (strain CCMP1986 / NIES-2087 / MED4), this protein is Ribosomal RNA small subunit methyltransferase H.